The following is a 185-amino-acid chain: Large ribosomal subunit protein uL16m (185 aa).

Belongs to the universal ribosomal protein uL16 family.

The protein resides in the mitochondrion. The polypeptide is Large ribosomal subunit protein uL16m (RPL16) (Zea mays (Maize)).